A 299-amino-acid chain; its full sequence is MSREKPKSFQSLILTLHDYWSRQGCVILQPHDVEVGAGTLHPATVLRALGPKAWNAAYVQPSRRPGDGRYGENPNRLQHYYQYQVILKPNPENMQDLYLGSLEAIGLDLRTHDIRFVEDDWENPTVGAWGLGWEVWCDGMEVSQYTYFQQVGGLDVNPVAGELTYGLERLAMYVFGVDNVYDLPFNDPDSPLGATTYGDVFLENERQQSEANFHGFDVAVLKQQFEQMEEQVPLMLARSYQDKALVLPAYDMVLKASHLFNLMNARGAIAVAERASYIGRIRDLCKMCASAWVEQQEAA.

The protein belongs to the class-II aminoacyl-tRNA synthetase family. As to quaternary structure, tetramer of two alpha and two beta subunits.

It localises to the cytoplasm. It carries out the reaction tRNA(Gly) + glycine + ATP = glycyl-tRNA(Gly) + AMP + diphosphate. The sequence is that of Glycine--tRNA ligase alpha subunit from Caulobacter vibrioides (strain ATCC 19089 / CIP 103742 / CB 15) (Caulobacter crescentus).